A 279-amino-acid polypeptide reads, in one-letter code: NH(3)-dependent NAD(+) synthetase (279 aa).

46–53 provides a ligand contact to ATP; the sequence is GISGGQDS. A Mg(2+)-binding site is contributed by D52. Deamido-NAD(+) is bound at residue R145. T165 contacts ATP. E170 is a Mg(2+) binding site. Deamido-NAD(+) contacts are provided by K178 and D185. K194 and T216 together coordinate ATP. 265 to 266 lines the deamido-NAD(+) pocket; that stretch reads HK.

The protein belongs to the NAD synthetase family. Homodimer.

It catalyses the reaction deamido-NAD(+) + NH4(+) + ATP = AMP + diphosphate + NAD(+) + H(+). It functions in the pathway cofactor biosynthesis; NAD(+) biosynthesis; NAD(+) from deamido-NAD(+) (ammonia route): step 1/1. In terms of biological role, catalyzes the ATP-dependent amidation of deamido-NAD to form NAD. Uses ammonia as a nitrogen source. The chain is NH(3)-dependent NAD(+) synthetase from Rhodococcus jostii (strain RHA1).